We begin with the raw amino-acid sequence, 534 residues long: Glucans biosynthesis protein D (534 aa).

Residues 1–26 constitute a signal peptide (tat-type signal); that stretch reads MQRRDFIRNASLALAAFGLPSLPACA.

Belongs to the OpgD/OpgG family. Predicted to be exported by the Tat system. The position of the signal peptide cleavage has not been experimentally proven.

The protein resides in the periplasm. It functions in the pathway glycan metabolism; osmoregulated periplasmic glucan (OPG) biosynthesis. Probably involved in the control of the structural glucose backbone of osmoregulated periplasmic glucans (OPGs). In Stenotrophomonas maltophilia (strain R551-3), this protein is Glucans biosynthesis protein D.